Here is a 560-residue protein sequence, read N- to C-terminus: MNKLENLKQLLAGKFKIENFKFTHAVGDDVIEVPKEDAPALLLFLRESGQFDFLMDVCGADYPSREKRFDVVYNLFNSKDSSRLRVKAQVGEGESIGTAIPAYRGADWFEREAYDMFGIIFEGHPNLRKILTHHQFVGHPLRKDYDANNQQACTNSLPIHFNNEPGSPGDVLNDKYLPLNIGPSHTAMHGTLRVMAEMDGETIVRCNNEIGYLHRCFEKMAETHPYNQVIPYTDRLNYCSAPMNNIGYCKAVERLLGVEIPPKAQAMRVILAELSRIIDHTIAIGTGAMDLGALTSFFYMFGMREKVYGLFEKLCGARLTVSMTRIGGMAQDAPEGWFDEVLALVKEIRKGTDEMANMVIDNKIFIQRTKNVCPVSAADAIQWGYTGPMLRACGVNLDLRKAQPYYGYDALDFDVPVGTNGDIYDRYLVRFEEMRQSVRIIEQVCKNVPGGDYTIRDKGIVLPEKKDVYGNIEGLMNHFMLIIKGLRPPVGEVYDATEAANGELGFYLVSDGSANPYRLKVRPPCFAIYQSFPTVVKGAMLADAIATVASMNLIAGELDR.

The interval 2-157 (NKLENLKQLL…NNQQACTNSL (156 aa)) is NADH dehydrogenase I subunit C. The tract at residues 175–560 (KYLPLNIGPS…MNLIAGELDR (386 aa)) is NADH dehydrogenase I subunit D.

It in the N-terminal section; belongs to the complex I 30 kDa subunit family. The protein in the C-terminal section; belongs to the complex I 49 kDa subunit family. NDH-1 is composed of 13 different subunits. Subunits NuoB, CD, E, F, and G constitute the peripheral sector of the complex.

The protein resides in the cytoplasm. Its subcellular location is the cell inner membrane. It carries out the reaction a quinone + NADH + 5 H(+)(in) = a quinol + NAD(+) + 4 H(+)(out). In terms of biological role, NDH-1 shuttles electrons from NADH, via FMN and iron-sulfur (Fe-S) centers, to quinones in the respiratory chain. The immediate electron acceptor for the enzyme in this species is believed to be ubiquinone. Couples the redox reaction to proton translocation (for every two electrons transferred, four hydrogen ions are translocated across the cytoplasmic membrane), and thus conserves the redox energy in a proton gradient. The protein is NADH-quinone oxidoreductase subunit C/D of Bdellovibrio bacteriovorus (strain ATCC 15356 / DSM 50701 / NCIMB 9529 / HD100).